The sequence spans 393 residues: MNSSCKSRVFNIISIIMVSMLILSLGAFANNNKAKADSHSKQLEINVKSDKVPQKVKDLAQQQFAGYAKALDKQSNAKTGKYELGEAFKIYKFNGEEDNSYYYPVIKDGKIVYTLTLSPKNKDDLNKSKEDMNYSVKISNFIAKDLDQIKDKNSNITVLTDEKGFYFEEDGKVRLVKATPLPGNVKEKESAKTVSAKLKQELKNTVTPTKVEENEAIQEDQVQYENTLKNFKIREQQFDNSWCAGFSMAALLNATKNTDTYNAHDIMRTLYPEVSEQDLPNCATFPNQMIEYGKSQGRDIHYQEGVPSYEQVDQLTKDNVGIMILAQSVSQNPNDPHLGHALAVVGNAKINDQEKLIYWNPWDTELSIQDADSSLLHLSFNRDYNWYGSMIGY.

The N-terminal stretch at 1-36 (MNSSCKSRVFNIISIIMVSMLILSLGAFANNNKAKA) is a signal peptide. The propeptide occupies 37 to 219 (DSHSKQLEIN…KVEENEAIQE (183 aa)). Catalysis depends on residues cysteine 243, histidine 340, and asparagine 360.

It belongs to the peptidase C47 family. As to quaternary structure, in the cytoplasm, prematurely activated/folded SspB forms a stable non-covalent complex with SspC. In terms of processing, proteolytically cleaved by staphylococcal serine protease (SspA).

The protein resides in the secreted. Prematurely activated/folded staphopain B is inhibited by staphostatin B (SspC), which is probably required to protect staphylococcal cytoplasmic proteins from degradation by SspB. Also inactivated by E-64 and stimulated by EDTA. In terms of biological role, cysteine protease that plays an important role in the inhibition of host innate immune response. Degrades host elastin, fibrogen, fibronectin and kininogen. Blocks phagocytosis of opsonised S.aureus by neutrophils and monocytes by inducing their death in a proteolytic activity-dependent manner. Decreases surface expression of the 'don't eat me' signal CD31 on neutrophils. Cleaves host galectin-3/LGALS3, thereby inhibiting the neutrophil-activating ability of the lectin. In Staphylococcus aureus (strain NCTC 8325 / PS 47), this protein is Staphopain B (sspB).